Reading from the N-terminus, the 488-residue chain is GTPase Der (488 aa).

The 164-residue stretch at 3 to 166 (PVVALVGRPN…YALAPYAEAL (164 aa)) folds into the EngA-type G 1 domain. GTP-binding positions include 9–16 (GRPNVGKS), 56–60 (DTGGI), and 118–121 (NKVD). The tract at residues 168–192 (LNRDGDDEEEKEEREYTEEEAEAEQ) is disordered. Residues 172-190 (GDDEEEKEEREYTEEEAEA) are compositionally biased toward acidic residues. Residues 200–373 (IKLAVIGKPN…SVQEAYESAT (174 aa)) form the EngA-type G 2 domain. Residues 206 to 213 (GKPNVGKS), 253 to 257 (DTAGV), and 318 to 321 (NKWD) each bind GTP. The KH-like domain maps to 374 to 458 (RRVSTSMLTR…PIQVRFQDGD (85 aa)).

Belongs to the TRAFAC class TrmE-Era-EngA-EngB-Septin-like GTPase superfamily. EngA (Der) GTPase family. Associates with the 50S ribosomal subunit.

GTPase that plays an essential role in the late steps of ribosome biogenesis. This is GTPase Der from Shewanella woodyi (strain ATCC 51908 / MS32).